Reading from the N-terminus, the 363-residue chain is Chorismate synthase (363 aa).

NADP(+) contacts are provided by Arg-48 and Arg-54. Residues 125-127 (RSS), 237-238 (NA), Gly-277, 292-296 (KPTSS), and Arg-318 contribute to the FMN site.

The protein belongs to the chorismate synthase family. As to quaternary structure, homotetramer. It depends on FMNH2 as a cofactor.

The catalysed reaction is 5-O-(1-carboxyvinyl)-3-phosphoshikimate = chorismate + phosphate. The protein operates within metabolic intermediate biosynthesis; chorismate biosynthesis; chorismate from D-erythrose 4-phosphate and phosphoenolpyruvate: step 7/7. Catalyzes the anti-1,4-elimination of the C-3 phosphate and the C-6 proR hydrogen from 5-enolpyruvylshikimate-3-phosphate (EPSP) to yield chorismate, which is the branch point compound that serves as the starting substrate for the three terminal pathways of aromatic amino acid biosynthesis. This reaction introduces a second double bond into the aromatic ring system. The sequence is that of Chorismate synthase from Pseudomonas putida (strain ATCC 700007 / DSM 6899 / JCM 31910 / BCRC 17059 / LMG 24140 / F1).